Reading from the N-terminus, the 204-residue chain is Proteasome subunit beta type-3-B (204 aa).

This sequence belongs to the peptidase T1B family. As to quaternary structure, component of the 20S core complex of the 26S proteasome. The 26S proteasome is composed of a core protease (CP), known as the 20S proteasome, capped at one or both ends by the 19S regulatory particle (RP/PA700). The 20S proteasome core is composed of 28 subunits that are arranged in four stacked rings, resulting in a barrel-shaped structure. The two end rings are each formed by seven alpha subunits, and the two central rings are each formed by seven beta subunits. The catalytic chamber with the active sites is on the inside of the barrel.

The protein resides in the cytoplasm. Its subcellular location is the nucleus. In terms of biological role, non-catalytic component of the proteasome, a multicatalytic proteinase complex which is characterized by its ability to cleave peptides with Arg, Phe, Tyr, Leu, and Glu adjacent to the leaving group at neutral or slightly basic pH. The proteasome has an ATP-dependent proteolytic activity. The polypeptide is Proteasome subunit beta type-3-B (PBC2) (Arabidopsis thaliana (Mouse-ear cress)).